A 52-amino-acid chain; its full sequence is Light-harvesting protein B-880 alpha chain (52 aa).

The Cytoplasmic portion of the chain corresponds to 1-12 (MWKVWLLFDPRR). The chain crosses the membrane as a helical span at residues 13–33 (TLVALFTFLFVLALLIHFILL). Residue His-29 participates in a bacteriochlorophyll binding. At 34–52 (STDRFNWMQGAPTAPAQTS) the chain is on the periplasmic side.

The protein belongs to the antenna complex alpha subunit family. The core complex is formed by different alpha and beta chains, binding bacteriochlorophyll molecules, and arranged most probably in tetrameric structures disposed around the reaction center. The non-pigmented gamma chains may constitute additional components.

Its subcellular location is the cell inner membrane. Its function is as follows. Antenna complexes are light-harvesting systems, which transfer the excitation energy to the reaction centers. The chain is Light-harvesting protein B-880 alpha chain from Afifella marina (Rhodobium marinum).